The chain runs to 455 residues: Glutamate-1-semialdehyde 2,1-aminomutase (455 aa).

Lysine 286 is subject to N6-(pyridoxal phosphate)lysine.

Belongs to the class-III pyridoxal-phosphate-dependent aminotransferase family. HemL subfamily. Homodimer. The cofactor is pyridoxal 5'-phosphate.

It localises to the cytoplasm. It catalyses the reaction (S)-4-amino-5-oxopentanoate = 5-aminolevulinate. The protein operates within porphyrin-containing compound metabolism; protoporphyrin-IX biosynthesis; 5-aminolevulinate from L-glutamyl-tRNA(Glu): step 2/2. The chain is Glutamate-1-semialdehyde 2,1-aminomutase from Clavibacter sepedonicus (Clavibacter michiganensis subsp. sepedonicus).